The primary structure comprises 218 residues: MSDVIKDLSELRLSYEQGELYETQVASNPHEQFLGWFNHALAANLHEPYAMSLATASASGRPHVRTVLLRGATEAGYDFYTNYDSQKGIDLAENPYAELLFYWPSLERQVRVGGHVVKIPEQESTDYYHKRPRDSQIAAYISTPQSGKIESRELLQQRFQDLQQQVQSHEVLDKPEFWGGYRLQPDYYEFWQGRPNRLHDRLSYEKIDGQWTLHRLMP.

Substrate contacts are provided by residues 12-15 (RLSY) and arginine 70. FMN contacts are provided by residues 65–70 (RTVLLR), 80–81 (YT), lysine 87, and glutamine 109. 3 residues coordinate substrate: tyrosine 127, arginine 131, and serine 135. Residues 145-146 (QS) and tryptophan 191 contribute to the FMN site. 197 to 199 (RLH) contacts substrate. Residue arginine 201 coordinates FMN.

It belongs to the pyridoxamine 5'-phosphate oxidase family. In terms of assembly, homodimer. It depends on FMN as a cofactor.

It catalyses the reaction pyridoxamine 5'-phosphate + O2 + H2O = pyridoxal 5'-phosphate + H2O2 + NH4(+). It carries out the reaction pyridoxine 5'-phosphate + O2 = pyridoxal 5'-phosphate + H2O2. It participates in cofactor metabolism; pyridoxal 5'-phosphate salvage; pyridoxal 5'-phosphate from pyridoxamine 5'-phosphate: step 1/1. Its pathway is cofactor metabolism; pyridoxal 5'-phosphate salvage; pyridoxal 5'-phosphate from pyridoxine 5'-phosphate: step 1/1. In terms of biological role, catalyzes the oxidation of either pyridoxine 5'-phosphate (PNP) or pyridoxamine 5'-phosphate (PMP) into pyridoxal 5'-phosphate (PLP). The chain is Pyridoxine/pyridoxamine 5'-phosphate oxidase from Acinetobacter baumannii (strain SDF).